Reading from the N-terminus, the 213-residue chain is Phosphoribosyl-dephospho-CoA transferase (213 aa).

Residues Asp135 and Asp137 contribute to the active site.

Belongs to the MdcG family.

It catalyses the reaction apo-[malonate decarboxylase ACP] + 2'-(5''-triphospho-alpha-D-ribosyl)-3'-dephospho-CoA = holo-[malonate decarboxylase ACP] + diphosphate. In terms of biological role, transfers 2'-(5-triphosphoribosyl)-3'-dephosphocoenzyme-A to the apo-[acyl-carrier-protein] of the malonate decarboxylase to yield holo-[acyl-carrier-protein]. The polypeptide is Phosphoribosyl-dephospho-CoA transferase (Xanthomonas campestris pv. campestris (strain ATCC 33913 / DSM 3586 / NCPPB 528 / LMG 568 / P 25)).